The following is a 444-amino-acid chain: N-succinylarginine dihydrolase (444 aa).

Substrate is bound by residues 19–28 (AGLSFGNVAS), Asn-110, and 137–138 (HR). Residue Glu-174 is part of the active site. Residue Arg-214 coordinates substrate. The active site involves His-250. The substrate site is built by Asp-252 and Asn-362. The active-site Nucleophile is the Cys-368.

The protein belongs to the succinylarginine dihydrolase family. In terms of assembly, homodimer.

The enzyme catalyses N(2)-succinyl-L-arginine + 2 H2O + 2 H(+) = N(2)-succinyl-L-ornithine + 2 NH4(+) + CO2. It functions in the pathway amino-acid degradation; L-arginine degradation via AST pathway; L-glutamate and succinate from L-arginine: step 2/5. Functionally, catalyzes the hydrolysis of N(2)-succinylarginine into N(2)-succinylornithine, ammonia and CO(2). This is N-succinylarginine dihydrolase from Shewanella baltica (strain OS185).